The primary structure comprises 222 residues: Uracil-DNA glycosylase (222 aa).

The active-site Proton acceptor is aspartate 66.

This sequence belongs to the uracil-DNA glycosylase (UDG) superfamily. UNG family.

The protein localises to the cytoplasm. The enzyme catalyses Hydrolyzes single-stranded DNA or mismatched double-stranded DNA and polynucleotides, releasing free uracil.. In terms of biological role, excises uracil residues from the DNA which can arise as a result of misincorporation of dUMP residues by DNA polymerase or due to deamination of cytosine. The chain is Uracil-DNA glycosylase from Porphyromonas gingivalis (strain ATCC 33277 / DSM 20709 / CIP 103683 / JCM 12257 / NCTC 11834 / 2561).